A 1377-amino-acid chain; its full sequence is DNA-directed RNA polymerase subunit beta (1377 aa).

Belongs to the RNA polymerase beta chain family. In terms of assembly, the RNAP catalytic core consists of 2 alpha, 1 beta, 1 beta' and 1 omega subunit. When a sigma factor is associated with the core the holoenzyme is formed, which can initiate transcription.

The catalysed reaction is RNA(n) + a ribonucleoside 5'-triphosphate = RNA(n+1) + diphosphate. In terms of biological role, DNA-dependent RNA polymerase catalyzes the transcription of DNA into RNA using the four ribonucleoside triphosphates as substrates. The chain is DNA-directed RNA polymerase subunit beta from Campylobacter lari (strain RM2100 / D67 / ATCC BAA-1060).